Consider the following 570-residue polypeptide: Formate--tetrahydrofolate ligase (570 aa).

65–72 (TPFGEGKT) serves as a coordination point for ATP.

It belongs to the formate--tetrahydrofolate ligase family.

It carries out the reaction (6S)-5,6,7,8-tetrahydrofolate + formate + ATP = (6R)-10-formyltetrahydrofolate + ADP + phosphate. The protein operates within one-carbon metabolism; tetrahydrofolate interconversion. This chain is Formate--tetrahydrofolate ligase, found in Shewanella sediminis (strain HAW-EB3).